The chain runs to 409 residues: L-cysteine:1D-myo-inositol 2-amino-2-deoxy-alpha-D-glucopyranoside ligase (409 aa).

A Zn(2+)-binding site is contributed by Cys25. L-cysteinyl-5'-AMP is bound by residues 25 to 28 (CGIT), Thr40, and 63 to 65 (NVT). The short motif at 27–37 (ITPYDATHIGH) is the 'HIGH' region element. Positions 179 to 184 (ERGGDP) match the 'ERGGDP' region motif. Trp219 provides a ligand contact to L-cysteinyl-5'-AMP. Residue Cys223 coordinates Zn(2+). An L-cysteinyl-5'-AMP-binding site is contributed by 241 to 243 (GSD). His248 serves as a coordination point for Zn(2+). Val274 contributes to the L-cysteinyl-5'-AMP binding site. Positions 280 to 284 (KMSKS) match the 'KMSKS' region motif.

The protein belongs to the class-I aminoacyl-tRNA synthetase family. MshC subfamily. In terms of assembly, monomer. Zn(2+) is required as a cofactor.

It catalyses the reaction 1D-myo-inositol 2-amino-2-deoxy-alpha-D-glucopyranoside + L-cysteine + ATP = 1D-myo-inositol 2-(L-cysteinylamino)-2-deoxy-alpha-D-glucopyranoside + AMP + diphosphate + H(+). Functionally, catalyzes the ATP-dependent condensation of GlcN-Ins and L-cysteine to form L-Cys-GlcN-Ins. The chain is L-cysteine:1D-myo-inositol 2-amino-2-deoxy-alpha-D-glucopyranoside ligase from Clavibacter sepedonicus (Clavibacter michiganensis subsp. sepedonicus).